Reading from the N-terminus, the 471-residue chain is V-type ATP synthase beta chain (471 aa).

It belongs to the ATPase alpha/beta chains family.

Produces ATP from ADP in the presence of a proton gradient across the membrane. The V-type beta chain is a regulatory subunit. This is V-type ATP synthase beta chain from Streptococcus pyogenes serotype M18 (strain MGAS8232).